A 444-amino-acid polypeptide reads, in one-letter code: Cerebral cavernous malformations 2 protein (444 aa).

The segment at 1 to 37 (MEEEGKKGKKPGIVSPFKRVFLKGEKSRDKKAHEKVT) is disordered. Ser15 carries the phosphoserine modification. Residues 22-37 (LKGEKSRDKKAHEKVT) are compositionally biased toward basic and acidic residues. Residues 59–248 (LSDYIEKEVK…TPTHHLSLHS (190 aa)) enclose the PID domain. Ser164 carries the phosphoserine modification. The interval 283–376 (SKTISESELS…NFLETIGVKD (94 aa)) is harmonin homology domain. Ser384 and Ser393 each carry phosphoserine. The interval 391-423 (ALSTTSSSTTNGNRATGSSDDRSAPSEGDEWDR) is disordered. The segment covering 392-408 (LSTTSSSTTNGNRATGS) has biased composition (low complexity). Residue Thr394 is modified to Phosphothreonine. Ser396 is modified (phosphoserine). Phosphothreonine is present on Thr399.

This sequence belongs to the CCM2 family. As to quaternary structure, part of a complex with MAP2K3, MAP3K3 and RAC1. Binds RAC1 directly and independently of its nucleotide-bound state. Interacts with HEG1 and KRIT1; KRIT1 greatly facilitates the interaction with HEG1. Interacts with PDCD10.

The protein localises to the cytoplasm. Its function is as follows. Component of the CCM signaling pathway which is a crucial regulator of heart and vessel formation and integrity. May act through the stabilization of endothelial cell junctions. May function as a scaffold protein for MAP2K3-MAP3K3 signaling. Seems to play a major role in the modulation of MAP3K3-dependent p38 activation induced by hyperosmotic shock. The polypeptide is Cerebral cavernous malformations 2 protein (CCM2) (Homo sapiens (Human)).